The sequence spans 285 residues: Bifunctional protein FolD (285 aa).

Residues 165–167 and Ser190 each bind NADP(+); that span reads GRS.

The protein belongs to the tetrahydrofolate dehydrogenase/cyclohydrolase family. Homodimer.

The enzyme catalyses (6R)-5,10-methylene-5,6,7,8-tetrahydrofolate + NADP(+) = (6R)-5,10-methenyltetrahydrofolate + NADPH. It catalyses the reaction (6R)-5,10-methenyltetrahydrofolate + H2O = (6R)-10-formyltetrahydrofolate + H(+). The protein operates within one-carbon metabolism; tetrahydrofolate interconversion. Functionally, catalyzes the oxidation of 5,10-methylenetetrahydrofolate to 5,10-methenyltetrahydrofolate and then the hydrolysis of 5,10-methenyltetrahydrofolate to 10-formyltetrahydrofolate. The sequence is that of Bifunctional protein FolD from Staphylococcus saprophyticus subsp. saprophyticus (strain ATCC 15305 / DSM 20229 / NCIMB 8711 / NCTC 7292 / S-41).